Consider the following 209-residue polypeptide: V-type ATP synthase subunit D (209 aa).

It belongs to the V-ATPase D subunit family.

Produces ATP from ADP in the presence of a proton gradient across the membrane. This is V-type ATP synthase subunit D (atpD) from Chlamydia pneumoniae (Chlamydophila pneumoniae).